Consider the following 208-residue polypeptide: ATP phosphoribosyltransferase (208 aa).

It belongs to the ATP phosphoribosyltransferase family. Short subfamily. Heteromultimer composed of HisG and HisZ subunits.

The protein resides in the cytoplasm. It carries out the reaction 1-(5-phospho-beta-D-ribosyl)-ATP + diphosphate = 5-phospho-alpha-D-ribose 1-diphosphate + ATP. The protein operates within amino-acid biosynthesis; L-histidine biosynthesis; L-histidine from 5-phospho-alpha-D-ribose 1-diphosphate: step 1/9. Its function is as follows. Catalyzes the condensation of ATP and 5-phosphoribose 1-diphosphate to form N'-(5'-phosphoribosyl)-ATP (PR-ATP). Has a crucial role in the pathway because the rate of histidine biosynthesis seems to be controlled primarily by regulation of HisG enzymatic activity. The chain is ATP phosphoribosyltransferase from Oceanobacillus iheyensis (strain DSM 14371 / CIP 107618 / JCM 11309 / KCTC 3954 / HTE831).